A 68-amino-acid polypeptide reads, in one-letter code: DNA-directed RNA polymerase subunit omega (68 aa).

It belongs to the RNA polymerase subunit omega family. The RNAP catalytic core consists of 2 alpha, 1 beta, 1 beta' and 1 omega subunit. When a sigma factor is associated with the core the holoenzyme is formed, which can initiate transcription.

The catalysed reaction is RNA(n) + a ribonucleoside 5'-triphosphate = RNA(n+1) + diphosphate. Its function is as follows. Promotes RNA polymerase assembly. Latches the N- and C-terminal regions of the beta' subunit thereby facilitating its interaction with the beta and alpha subunits. In Ruminiclostridium cellulolyticum (strain ATCC 35319 / DSM 5812 / JCM 6584 / H10) (Clostridium cellulolyticum), this protein is DNA-directed RNA polymerase subunit omega.